The primary structure comprises 872 residues: Alanine--tRNA ligase (872 aa).

Residues H567, H571, C669, and H673 each contribute to the Zn(2+) site.

The protein belongs to the class-II aminoacyl-tRNA synthetase family. Zn(2+) serves as cofactor.

Its subcellular location is the cytoplasm. It catalyses the reaction tRNA(Ala) + L-alanine + ATP = L-alanyl-tRNA(Ala) + AMP + diphosphate. Its function is as follows. Catalyzes the attachment of alanine to tRNA(Ala) in a two-step reaction: alanine is first activated by ATP to form Ala-AMP and then transferred to the acceptor end of tRNA(Ala). Also edits incorrectly charged Ser-tRNA(Ala) and Gly-tRNA(Ala) via its editing domain. The protein is Alanine--tRNA ligase of Streptococcus pneumoniae serotype 2 (strain D39 / NCTC 7466).